Here is a 203-residue protein sequence, read N- to C-terminus: NAD(P)H dehydrogenase (quinone) (203 aa).

The Flavodoxin-like domain occupies 3–194 (IMVVYYSAYG…AGANFQGRHV (192 aa)). Residues 9-14 (SAYGHV) and 82-84 (ARF) contribute to the FMN site. NAD(+) is bound at residue tyrosine 11. Tryptophan 102 contributes to the substrate binding site. Residues 117–123 (STGTQHG) and histidine 138 contribute to the FMN site.

This sequence belongs to the WrbA family. FMN is required as a cofactor.

The catalysed reaction is a quinone + NADH + H(+) = a quinol + NAD(+). It carries out the reaction a quinone + NADPH + H(+) = a quinol + NADP(+). This Syntrophus aciditrophicus (strain SB) protein is NAD(P)H dehydrogenase (quinone).